The chain runs to 250 residues: Tetrathionate reductase subunit B (250 aa).

The tat-type signal signal peptide spans 1–33 (MWTGVNMDSSKRQFLQQLGVLTAGASLVPLAEA). 3 4Fe-4S ferredoxin-type domains span residues 50-79 (YAMLIDLRRCIGCQSCTVSCTIENQTPQGA), 97-128 (VTNVLLPRLCNHCDNPPCVPVCPVQATFQRED), and 129-158 (GIVVVDNKRCVGCAYCVQACPYDARFINHE). The [4Fe-4S] cluster site is built by Cys-59, Cys-62, Cys-65, Cys-69, Cys-106, Cys-109, Cys-114, Cys-118, Cys-138, Cys-141, Cys-144, Cys-148, Cys-165, Cys-168, Cys-180, and Cys-184.

As to quaternary structure, probably composed of three subunits: TtrA, TtrB and TtrC. Post-translationally, predicted to be exported by the Tat system. The position of the signal peptide cleavage has not been experimentally proven.

It is found in the periplasm. Its subcellular location is the cell inner membrane. Functionally, part of a membrane-bound tetrathionate reductase that catalyzes the reduction of tetrathionate to thiosulfate. TtrB is probably involved in transfer of electrons from TtrC to TtrA. During mice infection, the ability to use tetrathionate as an electron acceptor is a growth advantage for S.typhimurium over the competing microbiota in the lumen of the inflamed gut. In Salmonella typhimurium (strain LT2 / SGSC1412 / ATCC 700720), this protein is Tetrathionate reductase subunit B (ttrB).